Reading from the N-terminus, the 119-residue chain is Holo-[acyl-carrier-protein] synthase (119 aa).

Mg(2+) is bound by residues Asp-5 and Glu-51.

This sequence belongs to the P-Pant transferase superfamily. AcpS family. Requires Mg(2+) as cofactor.

The protein localises to the cytoplasm. The catalysed reaction is apo-[ACP] + CoA = holo-[ACP] + adenosine 3',5'-bisphosphate + H(+). Its function is as follows. Transfers the 4'-phosphopantetheine moiety from coenzyme A to a Ser of acyl-carrier-protein. The protein is Holo-[acyl-carrier-protein] synthase of Helicobacter pylori (strain HPAG1).